We begin with the raw amino-acid sequence, 771 residues long: Probable glycosyltransferase STELLO1 (771 aa).

Residues 1 to 23 (MLVQDRAAPSPAKPPKSQIRELP) form a disordered region. The Cytoplasmic segment spans residues 1–50 (MLVQDRAAPSPAKPPKSQIRELPTHQQIRRRFSEPKNLDFSTWFSENLSR). A helical membrane pass occupies residues 51-71 (IAVFSLLIVTIVAFFFLYNTT). At 72–771 (DTASLLCFQS…EGDPLLMELV (700 aa)) the chain is on the lumenal side. Residues Asn242 and Asn729 are each glycosylated (N-linked (GlcNAc...) asparagine).

Belongs to the STELLO family. In terms of assembly, homo- and heterodimer with STL2. Interacts with CESA1, CESA3, CESA4, CESA6, CESA7 and CESA8, but not with GOT1. As to expression, expressed in cells that are expanding or producing secondary cell walls.

The protein localises to the golgi apparatus membrane. In terms of biological role, probable glycosyltransferase regulating the assembly and trafficking of cellulose synthase complexes. The sequence is that of Probable glycosyltransferase STELLO1 from Arabidopsis thaliana (Mouse-ear cress).